The following is a 277-amino-acid chain: tRNA pseudouridine synthase B (277 aa).

The active-site Nucleophile is D38.

The protein belongs to the pseudouridine synthase TruB family. Type 1 subfamily.

It catalyses the reaction uridine(55) in tRNA = pseudouridine(55) in tRNA. Responsible for synthesis of pseudouridine from uracil-55 in the psi GC loop of transfer RNAs. The chain is tRNA pseudouridine synthase B from Sulfurovum sp. (strain NBC37-1).